Here is a 202-residue protein sequence, read N- to C-terminus: Ribosomal RNA small subunit methyltransferase G (202 aa).

S-adenosyl-L-methionine-binding positions include Gly75, Phe80, 125–126 (VQ), and Arg139.

This sequence belongs to the methyltransferase superfamily. RNA methyltransferase RsmG family.

It localises to the cytoplasm. Specifically methylates the N7 position of a guanine in 16S rRNA. The sequence is that of Ribosomal RNA small subunit methyltransferase G from Mesomycoplasma hyopneumoniae (strain 7448) (Mycoplasma hyopneumoniae).